Here is a 308-residue protein sequence, read N- to C-terminus: MLTDRVLATKEALVVALGDNWERYRANMKNWFRSRWTKEEFDAESRKILTPDKLHLHNQFLLALLNKIDAFAPLENPPAVQTSSSSGNRSKRRKRSSRTFAERLNFELSDVLDFVAEDNMQIIRPPTTIGIPSDQQQQQLQSQRYCAQELFLPDAGFIMGRFLIGAWEIGLVSVDDNVAEYVAMAVQVLLKDLLSAIIKKRKHYKTSGEGNFYYDVGAPLRDPSLRNTVTRQKVDDTPLELDKELNTANFMRRQNDDVTFLSACEEVQPTERTVITLKDCQLALRDRNLIGSHAVYSINMERLNMMMH.

This sequence belongs to the TADA1 family. As to quaternary structure, component of the Spt-Ada-Gcn5 acetyltransferase (SAGA) complex consisting of wda/Taf5L, Saf6, Taf9, Taf10b, Taf12, Ada1, Spt3, Spt7, Spt20, Sf3b3, Sf3b5, Nipped-A/Tra1, a histone acetyltransferase (HAT) module made up of Gcn5, Ada2b (Isoform B), Ada3 and Sgf29, and a deubiquitinase (DUB) module made up of not/nonstop, Sgf11 and e(y)2 tethered to SAGA by Atxn7. Not a component of the Ada2a-containing ATAC complex.

Its subcellular location is the nucleus. In terms of biological role, component of the transcription regulatory complex SAGA, a multiprotein complex that activates transcription by remodeling chromatin and mediating histone acetylation and deubiquitination. The SAGA complex predominantly acetylates histone H3. The protein is Transcriptional adapter 1-2 of Drosophila melanogaster (Fruit fly).